The following is a 218-amino-acid chain: uncharacterized protein (218 aa).

This is an uncharacterized protein from Rickettsia prowazekii (strain Madrid E).